The chain runs to 63 residues: Large ribosomal subunit protein uL29 (63 aa).

It belongs to the universal ribosomal protein uL29 family.

This is Large ribosomal subunit protein uL29 from Shewanella halifaxensis (strain HAW-EB4).